The sequence spans 398 residues: Ribosomal RNA large subunit methyltransferase F (398 aa).

Residues 1–12 (MTPSRKPARPGA) are compositionally biased toward basic residues. Residues 1 to 85 (MTPSRKPARP…RNLHGQGYDF (85 aa)) form a disordered region. 2 stretches are compositionally biased toward low complexity: residues 20 to 40 (PSAKASRPKPSSQSKSKAQPK) and 48 to 59 (QAKSQAKPQAKS).

This sequence belongs to the methyltransferase superfamily. METTL16/RlmF family.

Its subcellular location is the cytoplasm. The catalysed reaction is adenosine(1618) in 23S rRNA + S-adenosyl-L-methionine = N(6)-methyladenosine(1618) in 23S rRNA + S-adenosyl-L-homocysteine + H(+). Specifically methylates the adenine in position 1618 of 23S rRNA. The chain is Ribosomal RNA large subunit methyltransferase F from Shewanella loihica (strain ATCC BAA-1088 / PV-4).